A 317-amino-acid polypeptide reads, in one-letter code: Putative methyltransferase YMR310C (317 aa).

Serine 190 bears the Phosphoserine mark.

This sequence belongs to the class IV-like SAM-binding methyltransferase superfamily.

The protein resides in the nucleus. The polypeptide is Putative methyltransferase YMR310C (Saccharomyces cerevisiae (strain ATCC 204508 / S288c) (Baker's yeast)).